A 248-amino-acid chain; its full sequence is Triosephosphate isomerase (248 aa).

Residues Asn-10 and Lys-12 each contribute to the substrate site. The active-site Electrophile is the His-95. The active-site Proton acceptor is Glu-165.

It belongs to the triosephosphate isomerase family. As to quaternary structure, homodimer.

It is found in the cytoplasm. The catalysed reaction is D-glyceraldehyde 3-phosphate = dihydroxyacetone phosphate. The protein operates within carbohydrate biosynthesis; gluconeogenesis. Its pathway is carbohydrate degradation; glycolysis; D-glyceraldehyde 3-phosphate from glycerone phosphate: step 1/1. This is Triosephosphate isomerase (TPI1) from Candida albicans (strain SC5314 / ATCC MYA-2876) (Yeast).